The chain runs to 399 residues: MAGICCGVVGETEPAAPVDSTSRASLRRRLDLLPSIKIVADSAVAPPLENCRKRQKRETVVLSTLPGNLDLDSNVRSENKKARSAVTNSNSVTEAESFFSDVPKIGTTSVCGRRRDMEDAVSIHPSFLQRNSENHHFYGVFDGHGCSHVAEKCRERLHDIVKKEVEVMASDEWTETMVKSFQKMDKEVSQRECNLVVNGATRSMKNSCRCELQSPQCDAVGSTAVVSVVTPEKIIVSNCGDSRAVLCRNGVAIPLSVDHKPDRPDELIRIQQAGGRVIYWDGARVLGVLAMSRAIGDNYLKPYVIPDPEVTVTDRTDEDECLILASDGLWDVVPNETACGVARMCLRGAGAGDDSDAAHNACSDAALLLTKLALARQSSDNVSVVVVDLRKRRNNQASS.

Positions 104-389 constitute a PPM-type phosphatase domain; the sequence is KIGTTSVCGR…DNVSVVVVDL (286 aa). 2 residues coordinate Mn(2+): D142 and G143. Zn(2+)-binding residues include C146, H148, C208, and C210. Mn(2+) is bound by residues D327, D331, and D380.

Belongs to the PP2C family. In terms of assembly, interacts with AKT2/AKT3. Interacts with ABA-bounded PYR1, PYL1, PYL2, PYL3, PYL4, PYL9 and PYL12, and with free PYL2, PYL3, PYL4 and PYL13. Binds to and inactivates SLAC1 and SRK2E. The inactivation of SRK2E does not require phosphatase activity. Interacts with CBL1, CBL2, CBL3, CBL5, and CBL7, but not CBL4, CBL6, and CBL9. Interacts with RGLG1 and RGLG5. Interacts with KIN10. It depends on Mg(2+) as a cofactor. Mn(2+) serves as cofactor. In terms of processing, ubiquitinated by RGLG1 and RGLG5 in response to abscisic acid (ABA). Ubiquitination of PP2CA leads to its degradation by the proteasome. As to expression, mostly expressed in seeds and leaves, and, to a lower extent, in roots, stems, and flowers, particularly in siliques. Essentially found in the phloem.

It carries out the reaction O-phospho-L-seryl-[protein] + H2O = L-seryl-[protein] + phosphate. It catalyses the reaction O-phospho-L-threonyl-[protein] + H2O = L-threonyl-[protein] + phosphate. Repressed by PYR/PYL/RCAR ABA receptors in an ABA-dependent manner. Major negative regulator of abscisic acid (ABA) responses during seed germination and cold acclimation. Confers insensitivity to ABA. Modulates negatively the AKT2/3 activity, which mediates K(+) transport and membrane polarization during stress situations, probably by dephosphorylation. Prevents stomata closure by inactivating the S-type anion efflux channel SLAC1 and its activator SRK2E. Represses KIN10 activity by the specific dephosphorylation of its T-loop Thr-198, leading to a poststress inactivation of SnRK1 signaling. This is Protein phosphatase 2C 37 (PP2CA) from Arabidopsis thaliana (Mouse-ear cress).